The chain runs to 291 residues: Exosome complex component rrp45 (291 aa).

Belongs to the RNase PH family. Component of the RNA exosome complex. Specifically part of the catalytically inactive RNA exosome core complex (Exo-9) which may associate with the catalytic subunits rrp6 and dis3 in cytoplasmic- and nuclear-specific RNA exosome complex forms. Exo-9 is formed by a hexameric base ring of RNase PH domain-containing subunits and a cap ring consisting of csl4, rrp4 and rrp40.

The protein localises to the cytoplasm. It localises to the nucleus. Its subcellular location is the nucleolus. Non-catalytic component of the RNA exosome complex which has 3'-&gt;5' exoribonuclease activity and participates in a multitude of cellular RNA processing and degradation events. In the nucleus, the RNA exosome complex is involved in proper maturation of stable RNA species such as rRNA, snRNA and snoRNA, in the elimination of RNA processing by-products and non-coding 'pervasive' transcripts, such as antisense RNA species and cryptic unstable transcripts (CUTs), and of mRNAs with processing defects, thereby limiting or excluding their export to the cytoplasm. In the cytoplasm, the RNA exosome complex is involved in general mRNA turnover and in RNA surveillance pathways, preventing translation of aberrant mRNAs. The catalytic inactive RNA exosome core complex of 9 subunits (Exo-9) is proposed to play a pivotal role in the binding and presentation of RNA for ribonucleolysis, and to serve as a scaffold for the association with catalytic subunits and accessory proteins or complexes. ski6 is part of the hexameric ring of RNase PH domain-containing subunits proposed to form a central channel which threads RNA substrates for degradation. This chain is Exosome complex component rrp45 (rrp45), found in Schizosaccharomyces pombe (strain 972 / ATCC 24843) (Fission yeast).